An 88-amino-acid polypeptide reads, in one-letter code: MNLSLLLFLIGILGFILNRKNIILMIIAIEIMLLAITLLVLMSSVSFDDIAGQTFSIYIISIAGAESVIGLSILVAYYRLRGTISLRT.

3 helical membrane passes run 1 to 21 (MNLS…NRKN), 22 to 42 (IILM…LVLM), and 55 to 75 (FSIY…SILV).

This sequence belongs to the complex I subunit 4L family.

It is found in the mitochondrion membrane. The enzyme catalyses a ubiquinone + NADH + 5 H(+)(in) = a ubiquinol + NAD(+) + 4 H(+)(out). In terms of biological role, core subunit of the mitochondrial membrane respiratory chain NADH dehydrogenase (Complex I) that is believed to belong to the minimal assembly required for catalysis. Complex I functions in the transfer of electrons from NADH to the respiratory chain. The immediate electron acceptor for the enzyme is believed to be ubiquinone. This chain is NADH-ubiquinone oxidoreductase chain 4L (ND4L), found in Schizophyllum commune (Split gill fungus).